The chain runs to 269 residues: Regulating synaptic membrane exocytosis protein 4 (269 aa).

Residues 115–233 form the C2 domain; the sequence is PMGGVEIGLQ…DLTTLAVGWY (119 aa). Ser-254 and Ser-257 each carry phosphoserine.

Binds PPFIA3. As to expression, brain specific.

Its subcellular location is the synapse. In terms of biological role, regulates synaptic membrane exocytosis. This Rattus norvegicus (Rat) protein is Regulating synaptic membrane exocytosis protein 4 (Rims4).